The following is an 818-amino-acid chain: Probable beta-glucosidase I (818 aa).

N-linked (GlcNAc...) asparagine glycosylation occurs at N176. Residue D204 is part of the active site. Residues 374–534 (DGKPGFTFRV…SQEELISNAV (161 aa)) enclose the PA14 domain. N453 and N472 each carry an N-linked (GlcNAc...) asparagine glycan.

The protein belongs to the glycosyl hydrolase 3 family.

Its subcellular location is the secreted. It carries out the reaction Hydrolysis of terminal, non-reducing beta-D-glucosyl residues with release of beta-D-glucose.. It functions in the pathway glycan metabolism; cellulose degradation. Beta-glucosidases are one of a number of cellulolytic enzymes involved in the degradation of cellulosic biomass. Catalyzes the last step releasing glucose from the inhibitory cellobiose. This is Probable beta-glucosidase I (bglI) from Aspergillus niger (strain ATCC MYA-4892 / CBS 513.88 / FGSC A1513).